Consider the following 153-residue polypeptide: D-aminoacyl-tRNA deacylase (153 aa).

The Gly-cisPro motif, important for rejection of L-amino acids motif lies at 137-138 (GP).

Belongs to the DTD family. As to quaternary structure, homodimer.

It is found in the cytoplasm. The catalysed reaction is glycyl-tRNA(Ala) + H2O = tRNA(Ala) + glycine + H(+). It catalyses the reaction a D-aminoacyl-tRNA + H2O = a tRNA + a D-alpha-amino acid + H(+). Functionally, an aminoacyl-tRNA editing enzyme that deacylates mischarged D-aminoacyl-tRNAs. Also deacylates mischarged glycyl-tRNA(Ala), protecting cells against glycine mischarging by AlaRS. Acts via tRNA-based rather than protein-based catalysis; rejects L-amino acids rather than detecting D-amino acids in the active site. By recycling D-aminoacyl-tRNA to D-amino acids and free tRNA molecules, this enzyme counteracts the toxicity associated with the formation of D-aminoacyl-tRNA entities in vivo and helps enforce protein L-homochirality. The sequence is that of D-aminoacyl-tRNA deacylase from Myxococcus xanthus (strain DK1622).